A 181-amino-acid chain; its full sequence is Inorganic pyrophosphatase (181 aa).

Substrate-binding residues include lysine 16, arginine 30, and tyrosine 42. 3 residues coordinate Mg(2+): aspartate 52, aspartate 57, and aspartate 89. A substrate-binding site is contributed by tyrosine 126.

It belongs to the PPase family. Homohexamer. Requires Mg(2+) as cofactor.

The protein resides in the cytoplasm. It carries out the reaction diphosphate + H2O = 2 phosphate + H(+). Catalyzes the hydrolysis of inorganic pyrophosphate (PPi) forming two phosphate ions. The chain is Inorganic pyrophosphatase from Malacoplasma penetrans (strain HF-2) (Mycoplasma penetrans).